A 243-amino-acid chain; its full sequence is Anti-sigma-K factor RskA (243 aa).

Over M1–A102 the chain is Cytoplasmic. A helical transmembrane segment spans residues V103–L123. Over R124–T243 the chain is Extracellular. Positions V223–T243 are disordered.

Belongs to the anti-sigma-K factor family.

Its subcellular location is the cell membrane. Its function is as follows. An anti-sigma factor for extracytoplasmic function (ECF) sigma factor SigK. ECF sigma factors are held in an inactive form by an anti-sigma factor until released by regulated intramembrane proteolysis (RIP). RIP occurs when an extracytoplasmic signal triggers a concerted proteolytic cascade to transmit information and elicit cellular responses. The membrane-spanning regulatory substrate protein is first cut extracytoplasmically (site-1 protease, S1P), then within the membrane itself (site-2 protease, S2P, Rip1), while cytoplasmic proteases finish degrading the regulatory protein, liberating the sigma factor. In Mycobacterium sp. (strain JLS), this protein is Anti-sigma-K factor RskA (rskA).